Here is a 131-residue protein sequence, read N- to C-terminus: Aspartate 1-decarboxylase (131 aa).

The active-site Schiff-base intermediate with substrate; via pyruvic acid is S25. S25 is modified (pyruvic acid (Ser)). T57 contacts substrate. Y58 (proton donor) is an active-site residue. Substrate is bound at residue 73–75 (GAA).

Belongs to the PanD family. Heterooctamer of four alpha and four beta subunits. It depends on pyruvate as a cofactor. Post-translationally, is synthesized initially as an inactive proenzyme, which is activated by self-cleavage at a specific serine bond to produce a beta-subunit with a hydroxyl group at its C-terminus and an alpha-subunit with a pyruvoyl group at its N-terminus.

The protein resides in the cytoplasm. It catalyses the reaction L-aspartate + H(+) = beta-alanine + CO2. The protein operates within cofactor biosynthesis; (R)-pantothenate biosynthesis; beta-alanine from L-aspartate: step 1/1. In terms of biological role, catalyzes the pyruvoyl-dependent decarboxylation of aspartate to produce beta-alanine. The chain is Aspartate 1-decarboxylase from Anaeromyxobacter dehalogenans (strain 2CP-C).